The primary structure comprises 495 residues: Glutamyl-tRNA(Gln) amidotransferase subunit A (495 aa).

Catalysis depends on charge relay system residues Lys78 and Ser158. The active-site Acyl-ester intermediate is the Ser182.

This sequence belongs to the amidase family. GatA subfamily. Heterotrimer of A, B and C subunits.

The enzyme catalyses L-glutamyl-tRNA(Gln) + L-glutamine + ATP + H2O = L-glutaminyl-tRNA(Gln) + L-glutamate + ADP + phosphate + H(+). In terms of biological role, allows the formation of correctly charged Gln-tRNA(Gln) through the transamidation of misacylated Glu-tRNA(Gln) in organisms which lack glutaminyl-tRNA synthetase. The reaction takes place in the presence of glutamine and ATP through an activated gamma-phospho-Glu-tRNA(Gln). This is Glutamyl-tRNA(Gln) amidotransferase subunit A from Dinoroseobacter shibae (strain DSM 16493 / NCIMB 14021 / DFL 12).